Consider the following 212-residue polypeptide: Outer-membrane lipoprotein carrier protein (212 aa).

The N-terminal stretch at 1-29 (MSSARRRALGFSFQALLLCAAGWHGAAQA) is a signal peptide.

The protein belongs to the LolA family. Monomer.

It is found in the periplasm. In terms of biological role, participates in the translocation of lipoproteins from the inner membrane to the outer membrane. Only forms a complex with a lipoprotein if the residue after the N-terminal Cys is not an aspartate (The Asp acts as a targeting signal to indicate that the lipoprotein should stay in the inner membrane). This is Outer-membrane lipoprotein carrier protein from Leptothrix cholodnii (strain ATCC 51168 / LMG 8142 / SP-6) (Leptothrix discophora (strain SP-6)).